A 399-amino-acid chain; its full sequence is 1-deoxy-D-xylulose 5-phosphate reductoisomerase (399 aa).

NADPH-binding residues include T13, G14, S15, I16, and N127. K128 is a binding site for 1-deoxy-D-xylulose 5-phosphate. NADPH is bound at residue E129. Residue D153 coordinates Mn(2+). 4 residues coordinate 1-deoxy-D-xylulose 5-phosphate: S154, E155, S187, and H210. E155 is a Mn(2+) binding site. G216 provides a ligand contact to NADPH. S223, N228, K229, and E232 together coordinate 1-deoxy-D-xylulose 5-phosphate. E232 lines the Mn(2+) pocket.

This sequence belongs to the DXR family. Mg(2+) is required as a cofactor. Requires Mn(2+) as cofactor.

It carries out the reaction 2-C-methyl-D-erythritol 4-phosphate + NADP(+) = 1-deoxy-D-xylulose 5-phosphate + NADPH + H(+). It functions in the pathway isoprenoid biosynthesis; isopentenyl diphosphate biosynthesis via DXP pathway; isopentenyl diphosphate from 1-deoxy-D-xylulose 5-phosphate: step 1/6. Catalyzes the NADPH-dependent rearrangement and reduction of 1-deoxy-D-xylulose-5-phosphate (DXP) to 2-C-methyl-D-erythritol 4-phosphate (MEP). This Bordetella parapertussis (strain 12822 / ATCC BAA-587 / NCTC 13253) protein is 1-deoxy-D-xylulose 5-phosphate reductoisomerase.